The chain runs to 511 residues: Zinc finger and BTB domain-containing protein 45 (511 aa).

Positions 33-96 (CDVTVRIREA…LYSGSLVVAQ (64 aa)) constitute a BTB domain. Residues 159–168 (ARPPGHPGAA) show a composition bias toward low complexity. 2 disordered regions span residues 159 to 241 (ARPP…PDCA) and 294 to 403 (EDGA…PPTY). A compositionally biased stretch (acidic residues) spans 206-224 (RGDEDDEESDDETDGEDGE). The segment covering 339–360 (PGPPAPPPSAPSGPAPAPPPAF) has biased composition (pro residues). A compositionally biased stretch (low complexity) spans 378 to 397 (PAPSAAPTTAPSGTPARTPG). 4 consecutive C2H2-type zinc fingers follow at residues 403 to 425 (YECSHCRKTFSSRKNYTKHMFIH), 431 to 453 (HQCAVCWRSFSLRDYLLKHMVTH), 459 to 481 (FQCAVCAKRFTQKSSLNVHMRTH), and 486 to 508 (APCPACGKVFSHRALLERHLAAH).

This sequence belongs to the krueppel C2H2-type zinc-finger protein family.

The protein resides in the nucleus. In terms of biological role, may be involved in transcriptional regulation. In the central nervous system, may play a role in glial cell differentiation. The sequence is that of Zinc finger and BTB domain-containing protein 45 (ZBTB45) from Homo sapiens (Human).